Reading from the N-terminus, the 318-residue chain is Homoserine kinase (318 aa).

97-107 (PIGSGLGSSAC) is a binding site for ATP.

It belongs to the GHMP kinase family. Homoserine kinase subfamily.

It localises to the cytoplasm. The catalysed reaction is L-homoserine + ATP = O-phospho-L-homoserine + ADP + H(+). It functions in the pathway amino-acid biosynthesis; L-threonine biosynthesis; L-threonine from L-aspartate: step 4/5. Its function is as follows. Catalyzes the ATP-dependent phosphorylation of L-homoserine to L-homoserine phosphate. The sequence is that of Homoserine kinase from Vibrio parahaemolyticus serotype O3:K6 (strain RIMD 2210633).